The primary structure comprises 193 residues: Probable thymidylate kinase (193 aa).

7–14 (GIDGAGKT) provides a ligand contact to ATP.

It belongs to the thymidylate kinase family.

It carries out the reaction dTMP + ATP = dTDP + ADP. The sequence is that of Probable thymidylate kinase (tmk) from Thermoplasma acidophilum (strain ATCC 25905 / DSM 1728 / JCM 9062 / NBRC 15155 / AMRC-C165).